The sequence spans 373 residues: Velvet complex subunit RYP3 (373 aa).

Basic and acidic residues predominate over residues 1–10 (MYTLKQDRPH). Disordered stretches follow at residues 1–26 (MYTL…LQHG) and 344–373 (RKDG…ENEG). One can recognise a Velvet domain in the interval 48-344 (VYEGRIYSLD…AFQGIKIPIR (297 aa)). Residues 364–373 (GEGEDWENEG) show a composition bias toward acidic residues.

It belongs to the velvet family. VelB subfamily. Component of the heterotrimeric velvet complex composed of LAE1, VEL1 and VEL2; VEL1A acting as a bridging protein between LAE1 and VEL2. Forms a heterodimeric complex with VOS1; the formation of the VEL2-VOS1 complex is light-dependent.

It localises to the nucleus. Its subcellular location is the cytoplasm. In terms of biological role, component of the velvet transcription factor complex that controls sexual/asexual developmental ratio in response to light, promoting sexual development in the darkness while stimulating asexual sporulation under illumination. The velvet complex acts as a global regulator for secondary metabolite gene expression. Component of the RYP2-RYP3 heterodimeric complex that plays a dual role in activating genes associated with spore maturation and repressing certain development-associated genes. The complex binds DNA through the DNA-binding domain of RYP2 that recognizes an 11-nucleotide consensus sequence 5'-CTGGCCGCGGC-3' consisting of two motifs in the promoters of key developmental regulatory genes. Required for viable spore production and regulation of sporulation in response to temperature, as well as for the switch to yeast-form in the presence of host cells. This is Velvet complex subunit RYP3 (RYP3) from Ajellomyces capsulatus (Darling's disease fungus).